Reading from the N-terminus, the 270-residue chain is Sec-independent protein translocase protein TatC (270 aa).

The next 6 helical transmembrane spans lie at 35–55 (LILS…YRVQ), 93–113 (AFWA…WAFI), 124–144 (WGLP…VFGY), 176–196 (VVTF…AVIL), 209–229 (QGWR…TPTP), and 231–251 (PANM…GVVL).

This sequence belongs to the TatC family. Forms a complex with TatA.

The protein localises to the cell membrane. Functionally, part of the twin-arginine translocation (Tat) system that transports large folded proteins containing a characteristic twin-arginine motif in their signal peptide across membranes. The polypeptide is Sec-independent protein translocase protein TatC (Deinococcus radiodurans (strain ATCC 13939 / DSM 20539 / JCM 16871 / CCUG 27074 / LMG 4051 / NBRC 15346 / NCIMB 9279 / VKM B-1422 / R1)).